We begin with the raw amino-acid sequence, 254 residues long: Leucyl/phenylalanyl-tRNA--protein transferase (254 aa).

The protein belongs to the L/F-transferase family.

It is found in the cytoplasm. The enzyme catalyses N-terminal L-lysyl-[protein] + L-leucyl-tRNA(Leu) = N-terminal L-leucyl-L-lysyl-[protein] + tRNA(Leu) + H(+). It carries out the reaction N-terminal L-arginyl-[protein] + L-leucyl-tRNA(Leu) = N-terminal L-leucyl-L-arginyl-[protein] + tRNA(Leu) + H(+). The catalysed reaction is L-phenylalanyl-tRNA(Phe) + an N-terminal L-alpha-aminoacyl-[protein] = an N-terminal L-phenylalanyl-L-alpha-aminoacyl-[protein] + tRNA(Phe). Functions in the N-end rule pathway of protein degradation where it conjugates Leu, Phe and, less efficiently, Met from aminoacyl-tRNAs to the N-termini of proteins containing an N-terminal arginine or lysine. The chain is Leucyl/phenylalanyl-tRNA--protein transferase from Burkholderia ambifaria (strain MC40-6).